We begin with the raw amino-acid sequence, 650 residues long: Sodium-dependent phosphate transporter 2 (650 aa).

Residues 1 to 5 lie on the Extracellular side of the membrane; that stretch reads MAMDG. A helical transmembrane segment spans residues 6–26; sequence YLWMVILGFIIAFILAFSVGA. Residues 27–46 lie on the Cytoplasmic side of the membrane; sequence NDVANSFGTAVGSGVVTLRQ. A helical membrane pass occupies residues 47 to 67; that stretch reads ACILASIFETTGSVLLGAKVG. The Extracellular segment spans residues 68–83; it reads ETIRKGIIDVNLYNDT. The N-linked (GlcNAc...) asparagine glycan is linked to Asn81. The helical transmembrane segment at 84-104 threads the bilayer; sequence VVTLMAGEVSAMVGSAVWQLI. Residues 105 to 109 are Cytoplasmic-facing; the sequence is ASFLR. Residues 110–130 traverse the membrane as a helical segment; it reads LPISGTHCIVGSTIGFSLVAN. At 131 to 142 the chain is on the extracellular side; the sequence is GTKGVQWMELVK. A helical membrane pass occupies residues 143-163; the sequence is IVASWFISPLLSGFMSGVLFV. Topologically, residues 164 to 192 are cytoplasmic; that stretch reads LIRMFILTKEDPVPNGLQALPLFYAATIA. Residues 193-212 form a helical membrane-spanning segment; that stretch reads INVFSIMYTGAPVLGLSLPI. A topological domain (extracellular) is located at residue Trp213. A helical transmembrane segment spans residues 214–234; sequence AIALISFGVALLFAFFVWLFV. At 235–482 the chain is on the cytoplasmic side; it reads CPWMRRKIAG…EEKEEKDTAE (248 aa). A phosphoserine mark is found at Ser253, Ser256, Ser259, Ser268, Ser315, and Ser384. The disordered stretch occupies residues 268–310; sequence SPFKELPGAKASDDSAVPLTNPTGEAVGPSEGTSTGNHPRTAY. The chain crosses the membrane as a helical span at residues 483-503; the sequence is VHLLFHFLQVLTACFGSFAHG. The Extracellular portion of the chain corresponds to 504–530; it reads GNDVSNAIGPLVALWLIYEQGGVMQEA. Residues 531–551 form a helical membrane-spanning segment; sequence ATPVWLLFYGGVGICTGLWVW. Residues 552-571 lie on the Cytoplasmic side of the membrane; the sequence is GRRVIQTMGKDLTPITPSSG. Residues 572-586 form a helical membrane-spanning segment; that stretch reads FTIELASAFTVVIAS. At 587–593 the chain is on the extracellular side; it reads NIGLPVS. The helical transmembrane segment at 594 to 609 threads the bilayer; the sequence is TTHCKVGSVVAVGWIR. The Cytoplasmic segment spans residues 610–621; that stretch reads SRKAVDWHLFRN. A helical transmembrane segment spans residues 622–642; the sequence is IFVAWFVTVPVAGLFSAAIMA. The Extracellular portion of the chain corresponds to 643 to 650; sequence IFMYGILS.

Belongs to the inorganic phosphate transporter (PiT) (TC 2.A.20) family. In terms of assembly, homodimer.

The protein localises to the cell membrane. Its subcellular location is the apical cell membrane. The enzyme catalyses 2 Na(+)(out) + phosphate(out) = 2 Na(+)(in) + phosphate(in). In terms of biological role, sodium-phosphate symporter which preferentially transports the monovalent form of phosphate with a stoichiometry of two sodium ions per phosphate ion. Plays a critical role in the determination of bone quality and strength by providing phosphate for bone mineralization. Required to maintain normal cerebrospinal fluid phosphate levels. Mediates phosphate-induced calcification of vascular smooth muscle cells (VCMCs) and can functionally compensate for loss of SLC20A1 in VCMCs. Functionally, (Microbial infection) Functions as a retroviral receptor and confers hamster cells susceptibility to infection to Gibbon Ape Leukemia Virus (GaLV) and amphotropic murine leukemia virus (A-MuLV). The chain is Sodium-dependent phosphate transporter 2 (SLC20A2) from Cricetulus griseus (Chinese hamster).